Consider the following 878-residue polypeptide: NUT family member 2E (878 aa).

5 disordered regions span residues 273-324 (WSQG…DDSC), 417-511 (QKSQ…VPEE), 527-560 (LLGP…PPDP), 622-757 (RLPP…EEEE), and 775-878 (WLPQ…HCSQ). 2 stretches are compositionally biased toward pro residues: residues 278–288 (PLPPPPPPAAQ) and 427–444 (CLPP…PPAP). 2 stretches are compositionally biased toward basic and acidic residues: residues 537 to 551 (EPEK…KQPQ) and 622 to 631 (RLPPLKEKQH).

Belongs to the NUT family.

The protein is NUT family member 2E (NUTM2E) of Homo sapiens (Human).